We begin with the raw amino-acid sequence, 410 residues long: Ribosomal RNA large subunit methyltransferase G (410 aa).

The protein belongs to the methyltransferase superfamily. RlmG family.

The protein localises to the cytoplasm. The enzyme catalyses guanosine(1835) in 23S rRNA + S-adenosyl-L-methionine = N(2)-methylguanosine(1835) in 23S rRNA + S-adenosyl-L-homocysteine + H(+). Functionally, specifically methylates the guanine in position 1835 (m2G1835) of 23S rRNA. This Alteromonas mediterranea (strain DSM 17117 / CIP 110805 / LMG 28347 / Deep ecotype) protein is Ribosomal RNA large subunit methyltransferase G.